We begin with the raw amino-acid sequence, 1133 residues long: Sterol regulatory element-binding protein 2 (1133 aa).

The transcriptional activation (acidic) stretch occupies residues 1 to 50 (MDENSELGGLETMETLTELGDELTLGDIDEMLQFVSNQVGEFSDLFSEQL). Residues 1 to 473 (MDENSELGGL…VALGMVDRSR (473 aa)) are Cytoplasmic-facing. Positions 56–65 (GGGGGSGSGG) are enriched in gly residues. The tract at residues 56–136 (GGGGGSGSGG…PQPQPQPPAQ (81 aa)) is disordered. The segment covering 92 to 109 (PLSTFSPSSTSPQAPALQ) has biased composition (low complexity). Residues 114-134 (PTPPRATPVLQPRPQPQPQPP) show a composition bias toward pro residues. Positions 229-483 (QQVPVLVQPQ…ILLCVLTFLG (255 aa)) are interaction with LMNA. In terms of domain architecture, bHLH spans 322-372 (ERRTTHNIIEKRYRSSINDKIIELKDLVMGTDAKMHKSGVLRKAIDYIKYL). A leucine-zipper region spans residues 372–393 (LQQVNHKLRQENMVLKLANQKN). Residue K456 forms a Glycyl lysine isopeptide (Lys-Gly) (interchain with G-Cter in SUMO2) linkage. The helical transmembrane segment at 474–494 (ILLCVLTFLGLSFNPLTSLLQ) threads the bilayer. Residues 495–525 (WGGAHNPDQHPYSGSGRNVLSLESGSGGWFD) are Lumenal-facing. Residues 526–546 (WMMPTLLLWLLNGVIVLSVFV) traverse the membrane as a helical segment. Residues 547–1133 (KLLVHGEPVI…LGGGTAIAAS (587 aa)) are Cytoplasmic-facing. At S1090 the chain carries Phosphoserine.

The protein belongs to the SREBP family. As to quaternary structure, homodimer; efficient DNA binding of the soluble transcription factor fragment requires dimerization with another bHLH protein. Interacts with LMNA. In terms of assembly, forms a tight complex with SCAP, the SCAP-SREBP complex, in the endoplasmic reticulum membrane and the Golgi apparatus. Interacts with PAQR3; the interaction anchors the SCAP-SREBP complex to the Golgi apparatus in low cholesterol conditions. Interacts (via C-terminal domain) with RNF139. Processed in the Golgi apparatus, releasing the protein from the membrane. At low cholesterol the SCAP-SREBP complex is recruited into COPII vesicles for export from the endoplasmic reticulum. In the Golgi, complex SREBPs are cleaved sequentially by site-1 (MBTPS1, S1P) and site-2 (MBTPS2, S2P) proteases. The first cleavage by site-1 protease occurs within the luminal loop, the second cleavage by site-2 protease occurs within the first transmembrane domain, releasing the transcription factor from the Golgi membrane. Apoptosis triggers cleavage by the cysteine proteases caspase-3 and caspase-7. Cleavage and activation is induced by mediated cholesterol efflux. Post-translationally, phosphorylated by AMPK, leading to suppress protein processing and nuclear translocation, and repress target gene expression. In terms of processing, SCAP-free SREBF2 is ubiquitinated by the BCR(ARMC5) complex, leading to its degradation. Ubiquitinated; the nuclear form has a rapid turnover and is rapidly ubiquitinated and degraded by the proteasome in the nucleus.

The protein localises to the endoplasmic reticulum membrane. Its subcellular location is the golgi apparatus membrane. It localises to the cytoplasmic vesicle. The protein resides in the COPII-coated vesicle membrane. It is found in the nucleus. With respect to regulation, activation by cleavage is down-regulated upon activation of SIRT3-dependent PRKAA1/AMPK-alpha signaling cascade which leads to inhibition of ATP-consuming lipogenesis to restore cellular energy balance. Its function is as follows. Precursor of the transcription factor form (Processed sterol regulatory element-binding protein 2), which is embedded in the endoplasmic reticulum membrane. Low sterol concentrations promote processing of this form, releasing the transcription factor form that translocates into the nucleus and activates transcription of genes involved in cholesterol biosynthesis. Functionally, key transcription factor that regulates expression of genes involved in cholesterol biosynthesis. Binds to the sterol regulatory element 1 (SRE-1) (5'-ATCACCCCAC-3'). Has dual sequence specificity binding to both an E-box motif (5'-ATCACGTGA-3') and to SRE-1 (5'-ATCACCCCAC-3'). Regulates transcription of genes related to cholesterol synthesis pathway. Regulates hepatic lipogenesis. This chain is Sterol regulatory element-binding protein 2, found in Rattus norvegicus (Rat).